A 684-amino-acid polypeptide reads, in one-letter code: Sec1 family domain-containing protein 2 (684 aa).

This sequence belongs to the STXBP/unc-18/SEC1 family.

Functionally, may be involved in protein transport. The chain is Sec1 family domain-containing protein 2 (Scfd2) from Mus musculus (Mouse).